Here is a 589-residue protein sequence, read N- to C-terminus: Cytochrome P450 monooxygenase TRI13 (589 aa).

The signal sequence occupies residues 1-21; the sequence is MFLSLCLMVLALYLLYKWALP. 4 N-linked (GlcNAc...) asparagine glycosylation sites follow: asparagine 52, asparagine 219, asparagine 243, and asparagine 366. Cysteine 531 contributes to the heme binding site.

Belongs to the cytochrome P450 family. Heme is required as a cofactor.

The protein operates within sesquiterpene biosynthesis; trichothecene biosynthesis. Cytochrome P450 monooxygenase; part of the core gene cluster that mediates the biosynthesis of trichothecenes, a very large family of chemically related bicyclic sesquiterpene compounds acting as mycotoxins, including T2-toxin. The biosynthesis of trichothecenes begins with the cyclization of farnesyl diphosphate to trichodiene and is catalyzed by the trichodiene synthase TRI5. Trichodiene undergoes a series of oxygenations catalyzed by the cytochrome P450 monooxygenase TRI4. TRI4 controls the addition of four oxygens at C-2, C-3, C-11, and the C-12, C-13-epoxide to form the intermediate isotrichotriol. Isotrichotriol then undergoes a non-enzymatic isomerization and cyclization to form isotrichodermol. During this process, the oxygen at the C-2 position becomes the pyran ring oxygen and the hydroxyl group at C-11 is lost. More complex type A trichothecenes are built by modifying isotrichodermol through a series of paired hydroxylation and acetylation or acylation steps. Isotrichodermol is converted to isotrichodermin by the acetyltransferase TRI101. TRI101 encodes a C-3 transacetylase that acts as a self-protection or resistance factor during biosynthesis and that the presence of a free C-3 hydroxyl group is a key component of Fusarium trichothecene phytotoxicity. A second hydroxyl group is added to C-15 by the trichothecene C-15 hydroxylase TRI11, producing 15-decalonectrin, which is then acetylated by TRI3, producing calonectrin. A third hydroxyl group is added at C-4 by the cytochrome P450 monooxygenase TRI13, converting calonectrin to 3,15-diacetoxyspirpenol, which is subsequently acetylated by the acetyltransferase TRI7. A fourth hydroxyl group is added to C-8 by the cytochrome P450 monooxygenase TRI1, followed by the addition of an isovaleryl moiety by TRI16. Finally, the acetyl group is removed from the C-3 position by the trichothecene C-3 esterase TRI8 to produce T-2 toxin. The polypeptide is Cytochrome P450 monooxygenase TRI13 (Fusarium sporotrichioides).